A 155-amino-acid chain; its full sequence is Protein-export protein SecB (155 aa).

This sequence belongs to the SecB family. In terms of assembly, homotetramer, a dimer of dimers. One homotetramer interacts with 1 SecA dimer.

It localises to the cytoplasm. One of the proteins required for the normal export of preproteins out of the cell cytoplasm. It is a molecular chaperone that binds to a subset of precursor proteins, maintaining them in a translocation-competent state. It also specifically binds to its receptor SecA. The protein is Protein-export protein SecB of Methylococcus capsulatus (strain ATCC 33009 / NCIMB 11132 / Bath).